The following is an 866-amino-acid chain: Leucine--tRNA ligase (866 aa).

A 'HIGH' region motif is present at residues 59–69 (PYPSGDLHMGH). Residues 393–421 (VPVIKTDPQTGEPLLPESAPLESPAETGQ) form a disordered region. Residues 404–418 (EPLLPESAPLESPAE) are compositionally biased toward low complexity. The short motif at 628-632 (AMSKS) is the 'KMSKS' region element. Lysine 631 is an ATP binding site.

The protein belongs to the class-I aminoacyl-tRNA synthetase family.

It is found in the cytoplasm. It carries out the reaction tRNA(Leu) + L-leucine + ATP = L-leucyl-tRNA(Leu) + AMP + diphosphate. The sequence is that of Leucine--tRNA ligase from Leifsonia xyli subsp. xyli (strain CTCB07).